Here is a 211-residue protein sequence, read N- to C-terminus: Large ribosomal subunit protein bL25 (211 aa).

It belongs to the bacterial ribosomal protein bL25 family. CTC subfamily. In terms of assembly, part of the 50S ribosomal subunit; part of the 5S rRNA/L5/L18/L25 subcomplex. Contacts the 5S rRNA. Binds to the 5S rRNA independently of L5 and L18.

Functionally, this is one of the proteins that binds to the 5S RNA in the ribosome where it forms part of the central protuberance. This Methylobacterium nodulans (strain LMG 21967 / CNCM I-2342 / ORS 2060) protein is Large ribosomal subunit protein bL25.